Here is a 392-residue protein sequence, read N- to C-terminus: Elongation factor Tu (392 aa).

Positions lysine 10–isoleucine 202 constitute a tr-type G domain. The G1 stretch occupies residues glycine 19–threonine 26. Glycine 19–threonine 26 provides a ligand contact to GTP. Residue threonine 26 coordinates Mg(2+). A G2 region spans residues glycine 60–asparagine 64. Residues aspartate 81–glycine 84 are G3. Residues aspartate 81 to histidine 85 and asparagine 136 to aspartate 139 contribute to the GTP site. The tract at residues asparagine 136–aspartate 139 is G4. The segment at serine 174 to leucine 176 is G5.

Belongs to the TRAFAC class translation factor GTPase superfamily. Classic translation factor GTPase family. EF-Tu/EF-1A subfamily. As to quaternary structure, monomer.

The protein localises to the cytoplasm. It carries out the reaction GTP + H2O = GDP + phosphate + H(+). Its function is as follows. GTP hydrolase that promotes the GTP-dependent binding of aminoacyl-tRNA to the A-site of ribosomes during protein biosynthesis. In Apple proliferation phytoplasma, this protein is Elongation factor Tu.